Reading from the N-terminus, the 97-residue chain is Large ribosomal subunit protein bL31 (97 aa).

The segment at 75-97 (NKTKKSNQAKVEKQTRHRSINEL) is disordered. Residues 84-97 (KVEKQTRHRSINEL) are compositionally biased toward basic and acidic residues.

Belongs to the bacterial ribosomal protein bL31 family. Type A subfamily. In terms of assembly, part of the 50S ribosomal subunit.

Binds the 23S rRNA. The sequence is that of Large ribosomal subunit protein bL31 from Mycoplasma genitalium (strain ATCC 33530 / DSM 19775 / NCTC 10195 / G37) (Mycoplasmoides genitalium).